Consider the following 466-residue polypeptide: Cysteine--tRNA ligase (466 aa).

Cysteine 28 contacts Zn(2+). A 'HIGH' region motif is present at residues 30–40 (PTVYNYIHIGN). Residues cysteine 208, histidine 233, and glutamate 237 each coordinate Zn(2+). Positions 265 to 269 (KMSKS) match the 'KMSKS' region motif. An ATP-binding site is contributed by lysine 268.

The protein belongs to the class-I aminoacyl-tRNA synthetase family. Monomer. The cofactor is Zn(2+).

It localises to the cytoplasm. It catalyses the reaction tRNA(Cys) + L-cysteine + ATP = L-cysteinyl-tRNA(Cys) + AMP + diphosphate. This Staphylococcus aureus (strain Mu3 / ATCC 700698) protein is Cysteine--tRNA ligase.